The chain runs to 284 residues: NAD kinase (284 aa).

D70 (proton acceptor) is an active-site residue. NAD(+) contacts are provided by residues 70-71 (DG), 139-140 (NE), K167, D169, L177, 180-185 (TAYNLS), and Q236.

This sequence belongs to the NAD kinase family. The cofactor is a divalent metal cation.

It localises to the cytoplasm. It carries out the reaction NAD(+) + ATP = ADP + NADP(+) + H(+). Involved in the regulation of the intracellular balance of NAD and NADP, and is a key enzyme in the biosynthesis of NADP. Catalyzes specifically the phosphorylation on 2'-hydroxyl of the adenosine moiety of NAD to yield NADP. The sequence is that of NAD kinase from Helicobacter pylori (strain ATCC 700392 / 26695) (Campylobacter pylori).